The following is a 395-amino-acid chain: Glutamyl-tRNA reductase (395 aa).

Residues 45 to 48 (TCNR), S87, 92 to 94 (EDQ), and Q98 contribute to the substrate site. C46 serves as the catalytic Nucleophile. 167–172 (GAGEMG) lines the NADP(+) pocket.

Belongs to the glutamyl-tRNA reductase family. In terms of assembly, homodimer.

The enzyme catalyses (S)-4-amino-5-oxopentanoate + tRNA(Glu) + NADP(+) = L-glutamyl-tRNA(Glu) + NADPH + H(+). The protein operates within porphyrin-containing compound metabolism; protoporphyrin-IX biosynthesis; 5-aminolevulinate from L-glutamyl-tRNA(Glu): step 1/2. In terms of biological role, catalyzes the NADPH-dependent reduction of glutamyl-tRNA(Glu) to glutamate 1-semialdehyde (GSA). The polypeptide is Glutamyl-tRNA reductase (Methanosphaera stadtmanae (strain ATCC 43021 / DSM 3091 / JCM 11832 / MCB-3)).